A 129-amino-acid chain; its full sequence is Phosphoribosyl-AMP cyclohydrolase (129 aa).

Residue D78 coordinates Mg(2+). A Zn(2+)-binding site is contributed by C79. 2 residues coordinate Mg(2+): D80 and D82. Residues C96 and C103 each coordinate Zn(2+).

This sequence belongs to the PRA-CH family. Homodimer. Requires Mg(2+) as cofactor. Zn(2+) is required as a cofactor.

The protein resides in the cytoplasm. The catalysed reaction is 1-(5-phospho-beta-D-ribosyl)-5'-AMP + H2O = 1-(5-phospho-beta-D-ribosyl)-5-[(5-phospho-beta-D-ribosylamino)methylideneamino]imidazole-4-carboxamide. The protein operates within amino-acid biosynthesis; L-histidine biosynthesis; L-histidine from 5-phospho-alpha-D-ribose 1-diphosphate: step 3/9. In terms of biological role, catalyzes the hydrolysis of the adenine ring of phosphoribosyl-AMP. The polypeptide is Phosphoribosyl-AMP cyclohydrolase (Nitrosomonas eutropha (strain DSM 101675 / C91 / Nm57)).